Here is a 741-residue protein sequence, read N- to C-terminus: Alpha-1,6-mannosylglycoprotein 6-beta-N-acetylglucosaminyltransferase A (741 aa).

The Cytoplasmic segment spans residues 1–13 (MALFTPWKLSSQK). The chain crosses the membrane as a helical; Signal-anchor for type II membrane protein span at residues 14-30 (LGFFLVTFGFIWGMMLL). Topologically, residues 31–741 (HFTIQQRTQP…GQVALCKDCL (711 aa)) are lumenal. 3 N-linked (GlcNAc...) asparagine glycosylation sites follow: asparagine 110, asparagine 115, and asparagine 118. 9 disulfide bridges follow: cysteine 145–cysteine 183, cysteine 156–cysteine 196, cysteine 172–cysteine 338, cysteine 372–cysteine 626, cysteine 649–cysteine 724, cysteine 653–cysteine 726, cysteine 660–cysteine 713, cysteine 681–cysteine 702, and cysteine 737–cysteine 740. A sufficient for catalytic activity region spans residues 213-741 (NSLAEIRTDF…GQVALCKDCL (529 aa)). The tract at residues 264-269 (KRKRKK) is important for activity in FGF2 release. A glycan (N-linked (GlcNAc...) asparagine) is linked at asparagine 334. 378 to 379 (DS) provides a ligand contact to substrate. N-linked (GlcNAc...) asparagine glycosylation is found at asparagine 433 and asparagine 447. Residue glutamate 526 coordinates UDP-N-acetyl-alpha-D-glucosamine. Position 554 (lysine 554) interacts with substrate.

The protein belongs to the glycosyltransferase 18 family. In terms of processing, N-glycosylated. A secreted form is released from the membrane after cleavage by gamma-secretase.

The protein resides in the golgi apparatus membrane. Its subcellular location is the secreted. The enzyme catalyses N(4)-{beta-D-GlcNAc-(1-&gt;2)-[beta-D-GlcNAc-(1-&gt;4)]-alpha-D-Man-(1-&gt;3)-[beta-D-GlcNAc-(1-&gt;2)-alpha-D-Man-(1-&gt;6)]-beta-D-Man-(1-&gt;4)-beta-D-GlcNAc-(1-&gt;4)-beta-D-GlcNAc}-L-asparaginyl-[protein] + UDP-N-acetyl-alpha-D-glucosamine = N(4)-{beta-D-GlcNAc-(1-&gt;2)-[beta-D-GlcNAc-(1-&gt;4)]-alpha-D-Man-(1-&gt;3)-[beta-D-GlcNAc-(1-&gt;2)-[beta-D-GlcNAc-(1-&gt;6)]-alpha-D-Man-(1-&gt;6)]-beta-D-Man-(1-&gt;4)-beta-D-GlcNAc-(1-&gt;4)-beta-D-GlcNAc}-L-asparaginyl-[protein] + UDP + H(+). The protein operates within protein modification; protein glycosylation. Activity is increased by Mn(2+) and Mg(2+). Its function is as follows. Catalyzes the addition of N-acetylglucosamine (GlcNAc) in beta 1-6 linkage to the alpha-linked mannose of biantennary N-linked oligosaccharides. Catalyzes an important step in the biosynthesis of branched, complex-type N-glycans, such as those found on EGFR, TGFR (TGF-beta receptor) and CDH2. Via its role in the biosynthesis of complex N-glycans, plays an important role in the activation of cellular signaling pathways, reorganization of the actin cytoskeleton, cell-cell adhesion and cell migration. MGAT5-dependent EGFR N-glycosylation enhances the interaction between EGFR and LGALS3 and thereby prevents rapid EGFR endocytosis and prolongs EGFR signaling. Required for efficient interaction between TGFB1 and its receptor. Enhances activation of intracellular signaling pathways by several types of growth factors, including FGF2, PDGF, IGF, TGFB1 and EGF. MGAT5-dependent CDH2 N-glycosylation inhibits CDH2-mediated homotypic cell-cell adhesion and contributes to the regulation of downstream signaling pathways. Promotes cell migration. Contributes to the regulation of the inflammatory response. MGAT5-dependent TCR N-glycosylation enhances the interaction between TCR and LGALS3, limits agonist-induced TCR clustering, and thereby dampens TCR-mediated responses to antigens. Required for normal leukocyte evasation and accumulation at sites of inflammation. Inhibits attachment of monocytes to the vascular endothelium and subsequent monocyte diapedesis. In terms of biological role, promotes proliferation of umbilical vein endothelial cells and angiogenesis, at least in part by promoting the release of the growth factor FGF2 from the extracellular matrix. The sequence is that of Alpha-1,6-mannosylglycoprotein 6-beta-N-acetylglucosaminyltransferase A (MGAT5) from Homo sapiens (Human).